The sequence spans 189 residues: Flavin prenyltransferase UbiX (189 aa).

Residues 10–12 (GAS), Ser-37, 88–91 (SIKT), and Arg-123 contribute to the FMN site. Dimethylallyl phosphate is bound by residues Tyr-153 and Arg-169.

It belongs to the UbiX/PAD1 family.

The enzyme catalyses dimethylallyl phosphate + FMNH2 = prenylated FMNH2 + phosphate. The protein operates within cofactor biosynthesis; ubiquinone biosynthesis. Its function is as follows. Flavin prenyltransferase that catalyzes the synthesis of the prenylated FMN cofactor (prenyl-FMN) for 4-hydroxy-3-polyprenylbenzoic acid decarboxylase UbiD. The prenyltransferase is metal-independent and links a dimethylallyl moiety from dimethylallyl monophosphate (DMAP) to the flavin N5 and C6 atoms of FMN. In Salmonella typhi, this protein is Flavin prenyltransferase UbiX.